Here is a 76-residue protein sequence, read N- to C-terminus: Adropin (76 aa).

An N-terminal signal peptide occupies residues 1–33; it reads MGAALSQGALIAIICNGLVGFLLLLLWVILCWA. A disordered region spans residues 41–76; sequence IDSLSESSPNSSPGPCPEKAPPPQKPSHEGSYLLQP. Over residues 52–65 the composition is skewed to pro residues; the sequence is SPGPCPEKAPPPQK.

The protein resides in the secreted. Its function is as follows. Involved in the regulation of glucose homeostasis and lipid metabolism. The chain is Adropin (ENHO) from Bos taurus (Bovine).